Reading from the N-terminus, the 239-residue chain is IkB-like protein (239 aa).

ANK repeat units lie at residues S48 to S80, D87 to V118, N124 to Q153, and K158 to F187. A Nuclear localization signal motif is present at residues H81–D87. The short motif at K203–E214 is the Nuclear localization signal element. The short motif at P206–C213 is the PxIxITxC motif; Interaction with host PPP3CA element. An FLCV motif motif is present at residues F228–V231.

Belongs to the asfivirus A238L family. In terms of assembly, interacts with host PPIA. Interacts with host PPP3CA/Calcineurin. Interacts with host RELA/p65; interaction of the 32 kDa form with host RELA results in the formation of a stable complex with NF-kappa-B. Interacts with host PPP3R1. Interacts with host EP300; this interaction inhibits the association of host EP300 with host RELA, JUN and NFATC2. The protein exists in a 28 kDa and a 32 kDa form, probably due to post-translational modifications which are neither phosphorylation, nor sumoylation.

It localises to the host nucleus. The protein resides in the host cytoplasm. Functionally, ikB-like protein that inhibits the binding of NF-kappa-B to DNA, thereby downregulating pro-inflammatory cytokine production. Forms a heterodimer with the NF-kappa-B subunit RELA/p65 and prevents the activation of the NF-kappa-B transcription factor. Inhibits calcineurin function, which is required for the induction of nuclear factor of activated T cells (NFAT)-dependent immune response genes. Prevents the binding of substrates to calcineurin without affecting the phosphatase activity. Does not contain the serine residues that are phosphorylated by host IkB kinase and thus is not degraded following stimulation of the NFkB pathway. This chain is IkB-like protein (A238L), found in Ornithodoros (relapsing fever ticks).